The chain runs to 453 residues: MAVSCPEVMYGAYYPYLYGRAGTSRSFYQYERFNQDLYSSSGVNLAASSSASGSSHSPCSPILPPSVSANAAAAVAAAAHNSAAAAVAVAANQASSSGGIGGGGLGGLGGLGGGPASGLLGSNVVPGSSSVGSVGLGMSPVLSGAAGHSLHSSHRTHAHSLAHAHTHPHSHTHTHTHQTKEEDLIVPRSEAEARLVGSQQHQHHNESSCSSGPDSPRHAHSHSHPLHGGGGATGGPSSAGGTGSGGGDGGGTGAIPKNLPALETPMGSGGGGLAGSGQGQAQYLSASCVVFTNYSGDTASQVDEHFSRALNYNNKDSKESSSPMSNRNFPPSFWNSNYVHPIPAPTHHQVSDLYGTATDTGYATDPWVPHAAHYGSYAHAAHAHAAHAHAYHHNMAQYGSLLRLPQQYASHGSRLHHDQQTAHALEYSSYPTMAGLEAQVAQVQESSKDLYWF.

Residues 145–279 form a disordered region; sequence AAGHSLHSSH…GGGLAGSGQG (135 aa). Basic residues predominate over residues 151 to 177; sequence HSSHRTHAHSLAHAHTHPHSHTHTHTH. Basic and acidic residues predominate over residues 178 to 193; that stretch reads QTKEEDLIVPRSEAEA. 2 stretches are compositionally biased toward gly residues: residues 227-253 and 267-278; these read HGGG…GGTG and GSGGGGLAGSGQ. The tract at residues 279-335 is ser-rich sd binding domain; it reads GQAQYLSASCVVFTNYSGDTASQVDEHFSRALNYNNKDSKESSSPMSNRNFPPSFWN.

The Ser-rich protein domain within the C-terminal region interacts with the C-terminus of sd to form a complex which acts as a selector for wing development. Interacts with Dhfr. As to expression, expressed in the developing wing primordia initially along the D/V wing boundary, and by the late third larval instar, maximal expression is seen in cells at the D/V wing disk boundary. Less expression is seen in cells located farther from this boundary.

It is found in the nucleus. Involved in determining which thoracic imaginal disk cells will form wings and halteres, perhaps by interacting with other nuclear regulatory proteins. When in combination with scalloped (sd), it acts as a transcriptional activation complex that regulates gene expression in the wing. Binding to sd switches the DNA target selectivity of sd. Required and sufficient for cell proliferation at the dorsal/ventral (D/V) boundary of the wing imaginal disk. Also required for cell proliferation in the wing imaginal disk, mediated via activation of E2f. By interacting with Dhfr, may control genes involved in DNA replication. In Drosophila melanogaster (Fruit fly), this protein is Protein vestigial (vg).